The following is a 301-amino-acid chain: Troponin T, cardiac muscle (301 aa).

Acidic residues predominate over residues 1-72; sequence MSDAEEVVEE…EAKDAEEGPV (72 aa). Disordered regions lie at residues 1–97 and 125–224; these read MSDA…DGER and NRKK…KKKI. Residue Ser-2 is modified to N-acetylserine. Ser-2 carries the phosphoserine; by CK2 modification. Basic and acidic residues-rich tracts occupy residues 125–186 and 206–224; these read NRKK…DEAR and QTER…KKKI. Phosphothreonine; by PKC/PRKCA is present on Thr-207. Ser-211 is modified (phosphoserine; by PKC/PRKCA). Phosphothreonine; by PKC/PRKCA and RAF1 is present on Thr-216. Thr-297 is subject to Phosphothreonine; by PKC/PRKCA.

This sequence belongs to the troponin T family. Phosphorylation at Thr-216 by PRKCA induces significant reduction in myofilament calcium sensitivity and actomyosin ATPase activity.

In terms of biological role, troponin T is the tropomyosin-binding subunit of troponin, the thin filament regulatory complex which confers calcium-sensitivity to striated muscle actomyosin ATPase activity. This chain is Troponin T, cardiac muscle (Tnnt2), found in Mus musculus (Mouse).